The primary structure comprises 362 residues: Cobalt-precorrin-5B C(1)-methyltransferase (362 aa).

It belongs to the CbiD family.

The enzyme catalyses Co-precorrin-5B + S-adenosyl-L-methionine = Co-precorrin-6A + S-adenosyl-L-homocysteine. The protein operates within cofactor biosynthesis; adenosylcobalamin biosynthesis; cob(II)yrinate a,c-diamide from sirohydrochlorin (anaerobic route): step 6/10. In terms of biological role, catalyzes the methylation of C-1 in cobalt-precorrin-5B to form cobalt-precorrin-6A. This Methanocaldococcus jannaschii (strain ATCC 43067 / DSM 2661 / JAL-1 / JCM 10045 / NBRC 100440) (Methanococcus jannaschii) protein is Cobalt-precorrin-5B C(1)-methyltransferase.